The primary structure comprises 436 residues: MSDRQQVTNSRGERIAIVAGLRTPFAKQATAFHGVSALDMGKMVVNELLSRSEIDPQLIEQLVYGQVVQMPAAPNIAREIVLGTGMNVSTDAYSVTRACATSFQSAVNVAESIMTGNIEIGLAGGSDSSSVLPIGVSKKLAHALVDLNKARTFKQKFAIARRLGLKDLMPVPPAVAEYSTGLSMGQTAEQMAKTYNISRADQDALAHRSHTLATETWNSGHLRNEVMTAHIPPYKQFIDRDNNIRENSVLESYAKLRPAFDRKHGTVTAANSTPLTDGASAIILMSEGRAKALGYQPIGYIKSYAFTAIDVWQDMLMGPSYATPLALKRAGMELEDLTLIEMHEAFAAQTLANMQMFGSKKFAEEKLGRNRAIGEIDMSKFNVLGGSLAYGHPFAATGTRLITQVCNELKRRGGGTGLATACAAGGLGAAMILEVE.

Cysteine 99 serves as the catalytic Acyl-thioester intermediate. Active-site proton acceptor residues include histidine 392 and cysteine 422.

This sequence belongs to the thiolase-like superfamily. Thiolase family. In terms of assembly, heterotetramer of two alpha chains (FadJ) and two beta chains (FadI).

The protein localises to the cytoplasm. The enzyme catalyses an acyl-CoA + acetyl-CoA = a 3-oxoacyl-CoA + CoA. It participates in lipid metabolism; fatty acid beta-oxidation. Catalyzes the final step of fatty acid oxidation in which acetyl-CoA is released and the CoA ester of a fatty acid two carbons shorter is formed. The sequence is that of 3-ketoacyl-CoA thiolase from Shewanella frigidimarina (strain NCIMB 400).